A 270-amino-acid polypeptide reads, in one-letter code: 2-dehydro-3-deoxyphosphooctonate aldolase (270 aa).

Belongs to the KdsA family.

The protein resides in the cytoplasm. The enzyme catalyses D-arabinose 5-phosphate + phosphoenolpyruvate + H2O = 3-deoxy-alpha-D-manno-2-octulosonate-8-phosphate + phosphate. Its pathway is carbohydrate biosynthesis; 3-deoxy-D-manno-octulosonate biosynthesis; 3-deoxy-D-manno-octulosonate from D-ribulose 5-phosphate: step 2/3. It participates in bacterial outer membrane biogenesis; lipopolysaccharide biosynthesis. This is 2-dehydro-3-deoxyphosphooctonate aldolase from Helicobacter hepaticus (strain ATCC 51449 / 3B1).